Here is a 379-residue protein sequence, read N- to C-terminus: UDP-4-amino-4-deoxy-L-arabinose--oxoglutarate aminotransferase (379 aa).

K182 is subject to N6-(pyridoxal phosphate)lysine.

It belongs to the DegT/DnrJ/EryC1 family. ArnB subfamily. In terms of assembly, homodimer. The cofactor is pyridoxal 5'-phosphate.

It carries out the reaction UDP-4-amino-4-deoxy-beta-L-arabinose + 2-oxoglutarate = UDP-beta-L-threo-pentopyranos-4-ulose + L-glutamate. The protein operates within nucleotide-sugar biosynthesis; UDP-4-deoxy-4-formamido-beta-L-arabinose biosynthesis; UDP-4-deoxy-4-formamido-beta-L-arabinose from UDP-alpha-D-glucuronate: step 2/3. It participates in bacterial outer membrane biogenesis; lipopolysaccharide biosynthesis. Catalyzes the conversion of UDP-4-keto-arabinose (UDP-Ara4O) to UDP-4-amino-4-deoxy-L-arabinose (UDP-L-Ara4N). The modified arabinose is attached to lipid A and is required for resistance to polymyxin and cationic antimicrobial peptides. In Escherichia coli O81 (strain ED1a), this protein is UDP-4-amino-4-deoxy-L-arabinose--oxoglutarate aminotransferase.